The primary structure comprises 217 residues: Probable GTP-binding protein EngB (217 aa).

The EngB-type G domain occupies 37–214 (AGIEVAFAGR…RAAMIRLLDE (178 aa)). GTP-binding positions include 45–52 (GRSNVGKS), 72–76 (GRTQE), 92–95 (DMPG), 159–162 (TKAD), and 193–195 (TSS). Residues Ser-52 and Thr-74 each coordinate Mg(2+).

The protein belongs to the TRAFAC class TrmE-Era-EngA-EngB-Septin-like GTPase superfamily. EngB GTPase family. The cofactor is Mg(2+).

Functionally, necessary for normal cell division and for the maintenance of normal septation. This chain is Probable GTP-binding protein EngB, found in Rhodopseudomonas palustris (strain BisB5).